The chain runs to 78 residues: Antimicrobial peptide marcin-18 (78 aa).

Positions 1 to 23 (MQFKKQLMVIFLAYFLVVNESEA) are cleaved as a signal peptide. Residue arginine 41 is modified to Arginine amide. A propeptide spanning residues 42 to 78 (RKNQRSRSIMKRDLENLFDPYQRNLELDRLLKQLPNY) is cleaved from the precursor.

Belongs to the non-disulfide-bridged peptide (NDBP) superfamily. Medium-length antimicrobial peptide (group 3) family. In terms of tissue distribution, expressed by the venom gland.

The protein resides in the secreted. Its subcellular location is the target cell membrane. Functionally, antimicrobial peptide with potent activity against bacteria. Acts by fastly disrupting the bacterial membrane. Shows activity against Gram-positive bacteria S.aureus (MIC=1.5-2.9 uM) and S.epidermidis (MIC=2.9 uM), M.luteus (MIC=23.4 uM), B.thuringiensis (MIC=2.9 uM), B.subtilis (MIC=2.9 uM) and Gram-negative bacteria E.coli (MIC=5.9-11.7 uM) and P.aeruginosa (MIC=5.9 uM), as well as against penicillin (MIC=2.9 uM) and methicillin (MIC=1.5-2.9 uM) resistant bacteria. Antibiotic activity is not affected by major negatively charged components of the prokaryotic cell wall (e.g. lipopolysaccharides and lipoteichoic acid). In vivo, in a mouse model of lethal peritonitis, shows potent antibiotic activity without cytotoxicity, improving the survival rate. This is Antimicrobial peptide marcin-18 from Olivierus martensii (Manchurian scorpion).